The sequence spans 81 residues: Short neurotoxin 2 (81 aa).

Positions 1 to 21 (MKTLLLTLVVVTIVCLDLGYT) are cleaved as a signal peptide. 4 disulfides stabilise this stretch: C24–C43, C38–C60, C62–C73, and C74–C79.

The protein belongs to the three-finger toxin family. Short-chain subfamily. Type I alpha-neurotoxin sub-subfamily. In terms of tissue distribution, expressed by the venom gland.

Its subcellular location is the secreted. Functionally, binds to muscle nicotinic acetylcholine receptor (nAChR) and inhibit acetylcholine from binding to the receptor, thereby impairing neuromuscular transmission. The polypeptide is Short neurotoxin 2 (Tropidechis carinatus (Australian rough-scaled snake)).